A 238-amino-acid chain; its full sequence is tRNA (guanine-N(7)-)-methyltransferase (238 aa).

Glutamate 68, glutamate 93, aspartate 120, and aspartate 143 together coordinate S-adenosyl-L-methionine. Aspartate 143 is a catalytic residue. Residues lysine 147, aspartate 179, and 216–219 (TKFE) each bind substrate.

It belongs to the class I-like SAM-binding methyltransferase superfamily. TrmB family.

It carries out the reaction guanosine(46) in tRNA + S-adenosyl-L-methionine = N(7)-methylguanosine(46) in tRNA + S-adenosyl-L-homocysteine. Its pathway is tRNA modification; N(7)-methylguanine-tRNA biosynthesis. In terms of biological role, catalyzes the formation of N(7)-methylguanine at position 46 (m7G46) in tRNA. This Shewanella woodyi (strain ATCC 51908 / MS32) protein is tRNA (guanine-N(7)-)-methyltransferase.